We begin with the raw amino-acid sequence, 549 residues long: Dihydroxy-acid dehydratase (549 aa).

Position 78 (Asp-78) interacts with Mg(2+). [2Fe-2S] cluster is bound at residue Cys-119. Positions 120 and 121 each coordinate Mg(2+). An N6-carboxylysine modification is found at Lys-121. Cys-191 contributes to the [2Fe-2S] cluster binding site. A Mg(2+)-binding site is contributed by Glu-441. Catalysis depends on Ser-466, which acts as the Proton acceptor.

The protein belongs to the IlvD/Edd family. Homodimer. It depends on [2Fe-2S] cluster as a cofactor. Requires Mg(2+) as cofactor.

The enzyme catalyses (2R)-2,3-dihydroxy-3-methylbutanoate = 3-methyl-2-oxobutanoate + H2O. The catalysed reaction is (2R,3R)-2,3-dihydroxy-3-methylpentanoate = (S)-3-methyl-2-oxopentanoate + H2O. The protein operates within amino-acid biosynthesis; L-isoleucine biosynthesis; L-isoleucine from 2-oxobutanoate: step 3/4. It participates in amino-acid biosynthesis; L-valine biosynthesis; L-valine from pyruvate: step 3/4. In terms of biological role, functions in the biosynthesis of branched-chain amino acids. Catalyzes the dehydration of (2R,3R)-2,3-dihydroxy-3-methylpentanoate (2,3-dihydroxy-3-methylvalerate) into 2-oxo-3-methylpentanoate (2-oxo-3-methylvalerate) and of (2R)-2,3-dihydroxy-3-methylbutanoate (2,3-dihydroxyisovalerate) into 2-oxo-3-methylbutanoate (2-oxoisovalerate), the penultimate precursor to L-isoleucine and L-valine, respectively. This Methanothermobacter thermautotrophicus (strain ATCC 29096 / DSM 1053 / JCM 10044 / NBRC 100330 / Delta H) (Methanobacterium thermoautotrophicum) protein is Dihydroxy-acid dehydratase.